The chain runs to 750 residues: Elastin (750 aa).

The N-terminal stretch at 1–24 (ARQAAAPLLPGVLLLFSILPASQQ) is a signal peptide. 4-hydroxyproline occurs at positions 32, 67, 102, 176, 189, 192, and 211. Repeat unit 1 spans residues 83-127 (GAGVGGLGAGLGAFPGAAFPGAASAAALKAAAKAGAGLGGVGGIG). The 8 X tandem repeats stretch occupies residues 83-686 (GAGVGGLGAG…GVGGLGVGGL (604 aa)). 7 tandem repeats follow at residues 219–262 (VNGL…AGVL), 263–318 (PGAG…GVPG), 319–393 (VVPG…VPGV), 394–482 (PGVP…VPGV), 483–554 (GVPG…VGGL), 555–619 (VPGV…PGVT), and 620–686 (PGVG…VGGL). Residues Pro-276, Pro-345, Pro-363, Pro-368, Pro-441, Pro-455, and Pro-480 each carry the 4-hydroxyproline modification. Residues Pro-576, Pro-635, and Pro-720 each carry the 4-hydroxyproline modification. Cys-739 and Cys-745 are oxidised to a cystine.

It belongs to the elastin family. As to quaternary structure, the polymeric elastin chains are cross-linked together into an extensible 3D network. Post-translationally, elastin is formed through the cross-linking of its soluble precursor tropoelastin. Cross-linking is initiated through the action of lysyl oxidase on exposed lysines to form allysine. Subsequent spontaneous condensation reactions with other allysine or unmodified lysine residues result in various bi-, tri-, and tetrafunctional cross-links. The most abundant cross-links in mature elastin fibers are lysinonorleucine, allysine aldol, desmosine, and isodesmosine. Hydroxylated on proline residues. In terms of processing, hydroxylation on proline residues within the sequence motif, GXPG, is most likely to be 4-hydroxy as this fits the requirement for 4-hydroxylation in vertebrates.

The protein resides in the secreted. The protein localises to the extracellular space. It is found in the extracellular matrix. Major structural protein of tissues such as aorta and nuchal ligament, which must expand rapidly and recover completely. This is Elastin (ELN) from Gallus gallus (Chicken).